A 133-amino-acid polypeptide reads, in one-letter code: DNA-directed RNA polymerases I and III subunit RPAC2 (133 aa).

N-acetylmethionine is present on methionine 1. The interval 1-22 (MEEDQELERKMSGVKTSMAEGE) is disordered.

This sequence belongs to the archaeal Rpo11/eukaryotic RPB11/RPC19 RNA polymerase subunit family. Component of the RNA polymerase I and RNA polymerase III complexes consisting of at least 13 and 17 subunits, respectively. The transcriptionally active RNA polymerase III complex consists of a ten-subunit horseshoe-shaped catalytic core composed of POLR3A/RPC1, POLR3B/RPC2, POLR1C/RPAC1, POLR1D/RPAC2, POLR3K/RPC10, POLR2E/RPABC1, POLR2F/RPABC2, POLR2H/RPABC3, POLR2K/RPABC4 and POLR2L/RPABC5; a mobile stalk composed of two subunits POLR3H/RPC8 and CRCP/RPC9, protruding from the core and functioning primarily in transcription initiation; and additional subunits homologous to general transcription factors of the RNA polymerase II machinery, POLR3C/RPC3-POLR3F/RPC6-POLR3G/RPC7 heterotrimer required for transcription initiation and POLR3D/RPC4-POLR3E/RPC5 heterodimer involved in both transcription initiation and termination.

The protein resides in the nucleus. Functionally, DNA-dependent RNA polymerase catalyzes the transcription of DNA into RNA using the four ribonucleoside triphosphates as substrates. Common component of RNA polymerases I and III which synthesize ribosomal RNA precursor pre-rRNA and short non-coding RNAs including 5S rRNA, snRNAs, tRNAs and miRNAs, respectively. In Bos taurus (Bovine), this protein is DNA-directed RNA polymerases I and III subunit RPAC2 (POLR1D).